Consider the following 363-residue polypeptide: UDP-3-O-acylglucosamine N-acyltransferase (363 aa).

His-252 functions as the Proton acceptor in the catalytic mechanism.

The protein belongs to the transferase hexapeptide repeat family. LpxD subfamily. In terms of assembly, homotrimer.

It catalyses the reaction a UDP-3-O-[(3R)-3-hydroxyacyl]-alpha-D-glucosamine + a (3R)-hydroxyacyl-[ACP] = a UDP-2-N,3-O-bis[(3R)-3-hydroxyacyl]-alpha-D-glucosamine + holo-[ACP] + H(+). The protein operates within bacterial outer membrane biogenesis; LPS lipid A biosynthesis. Functionally, catalyzes the N-acylation of UDP-3-O-acylglucosamine using 3-hydroxyacyl-ACP as the acyl donor. Is involved in the biosynthesis of lipid A, a phosphorylated glycolipid that anchors the lipopolysaccharide to the outer membrane of the cell. The chain is UDP-3-O-acylglucosamine N-acyltransferase from Cupriavidus necator (strain ATCC 17699 / DSM 428 / KCTC 22496 / NCIMB 10442 / H16 / Stanier 337) (Ralstonia eutropha).